A 456-amino-acid chain; its full sequence is UPF0496 protein 4 (456 aa).

The chain crosses the membrane as a helical span at residues 205 to 221 (SVTVFVCSIFVAVLSGS).

This sequence belongs to the ROH1 family.

The protein resides in the membrane. In Oryza sativa subsp. indica (Rice), this protein is UPF0496 protein 4.